We begin with the raw amino-acid sequence, 335 residues long: Phosphate acyltransferase (335 aa).

The protein belongs to the PlsX family. Homodimer. Probably interacts with PlsY.

Its subcellular location is the cytoplasm. The enzyme catalyses a fatty acyl-[ACP] + phosphate = an acyl phosphate + holo-[ACP]. It participates in lipid metabolism; phospholipid metabolism. Its function is as follows. Catalyzes the reversible formation of acyl-phosphate (acyl-PO(4)) from acyl-[acyl-carrier-protein] (acyl-ACP). This enzyme utilizes acyl-ACP as fatty acyl donor, but not acyl-CoA. This is Phosphate acyltransferase from Clostridium botulinum (strain Langeland / NCTC 10281 / Type F).